The following is a 361-amino-acid chain: 3-dehydroquinate synthase (361 aa).

Residues S72 to K77, T130 to T131, K142, and K151 contribute to the NAD(+) site. Zn(2+) is bound by residues E184, H247, and H264.

It belongs to the sugar phosphate cyclases superfamily. Dehydroquinate synthase family. Requires Co(2+) as cofactor. It depends on Zn(2+) as a cofactor. The cofactor is NAD(+).

It is found in the cytoplasm. It carries out the reaction 7-phospho-2-dehydro-3-deoxy-D-arabino-heptonate = 3-dehydroquinate + phosphate. Its pathway is metabolic intermediate biosynthesis; chorismate biosynthesis; chorismate from D-erythrose 4-phosphate and phosphoenolpyruvate: step 2/7. Catalyzes the conversion of 3-deoxy-D-arabino-heptulosonate 7-phosphate (DAHP) to dehydroquinate (DHQ). This chain is 3-dehydroquinate synthase, found in Bacillus cereus (strain B4264).